A 395-amino-acid chain; its full sequence is RNA polymerase II elongation factor ELL3 (395 aa).

Disordered regions lie at residues 124–149 (SSLQRHNRTEDARDRESWQNVGDYPE), 163–182 (VPDPLASSQGQSLPGSSREH), 194–218 (LPNRDPDQALPPSASQKHVDKKRPA), and 233–279 (LAPS…SLSP). Over residues 130–140 (NRTEDARDRES) the composition is skewed to basic and acidic residues. The span at 168–177 (ASSQGQSLPG) shows a compositional bias: polar residues. Residues 246 to 258 (LQEEDWEQEDKDE) show a composition bias toward acidic residues. Residues 268–277 (PSVQADSESL) are compositionally biased toward polar residues. In terms of domain architecture, OCEL spans 283–393 (PDYLLQYRAI…LILEFEEKNR (111 aa)).

The protein belongs to the ELL/occludin family. As to quaternary structure, interacts with AFF4. Component of the super elongation complex (SEC), at least composed of EAF1, EAF2, CDK9, MLLT3/AF9, AFF (AFF1 or AFF4), the P-TEFb complex and ELL (ELL, ELL2 or ELL3). Component of the little elongation complex (LEC), at least composed of ELL (ELL, ELL2 or ELL3), ZC3H8, ICE1 and ICE2.

The protein localises to the nucleus. Enhancer-binding elongation factor that specifically binds enhancers in embryonic stem cells (ES cells), marks them, and is required for their future activation during stem cell specification. Elongation factor component of the super elongation complex (SEC), a complex required to increase the catalytic rate of RNA polymerase II transcription by suppressing transient pausing by the polymerase at multiple sites along the DNA. Component of the little elongation complex (LEC), a complex required to regulate small nuclear RNA (snRNA) gene transcription by RNA polymerase II and III. Does not only bind to enhancer regions of active genes, but also marks the enhancers that are in a poised or inactive state in ES cells and is required for establishing proper RNA polymerase II occupancy at developmentally regulated genes in a cohesin-dependent manner. Probably required for priming developmentally regulated genes for later recruitment of the super elongation complex (SEC), for transcriptional activation during differentiation. Required for recruitment of P-TEFb within SEC during differentiation. Probably preloaded on germ cell chromatin, suggesting that it may prime gene activation by marking enhancers as early as in the germ cells. Promoting epithelial-mesenchymal transition (EMT). This chain is RNA polymerase II elongation factor ELL3 (ELL3), found in Bos taurus (Bovine).